A 693-amino-acid chain; its full sequence is Heat shock protein homolog SSE1 (693 aa).

Residue Ser-2 is modified to N-acetylserine. Lys-195 participates in a covalent cross-link: Glycyl lysine isopeptide (Lys-Gly) (interchain with G-Cter in ubiquitin). Thr-242 carries the phosphothreonine modification. Residues 653–693 (IRSKQEASQMAAMAEKLAAQRKAEAEKKEEKKDTEGDVDMD) form a disordered region. Ser-660 is subject to Phosphoserine. A compositionally biased stretch (basic and acidic residues) spans 673-687 (RKAEAEKKEEKKDTE).

This sequence belongs to the heat shock protein 70 family.

Its subcellular location is the cytoplasm. Functionally, has a calcium-dependent calmodulin-binding activity. Required for normal growth at various temperatures. This chain is Heat shock protein homolog SSE1 (SSE1), found in Saccharomyces cerevisiae (strain ATCC 204508 / S288c) (Baker's yeast).